The chain runs to 556 residues: uncharacterized protein (556 aa).

A helical transmembrane segment spans residues Leu16–Ile36.

The protein resides in the membrane. This is an uncharacterized protein from Mycoplasma genitalium (strain ATCC 33530 / DSM 19775 / NCTC 10195 / G37) (Mycoplasmoides genitalium).